Reading from the N-terminus, the 216-residue chain is UPF0323 lipoprotein HPG27_212 (216 aa).

The N-terminal stretch at 1 to 27 is a signal peptide; it reads MKKPYRKISDYAIVGGLSALVMVSIVG. A lipid anchor (N-palmitoyl cysteine) is attached at C28. C28 is lipidated: S-diacylglycerol cysteine. Residues 159–170 show a composition bias toward polar residues; that stretch reads QRTYKSPQAYQR. The disordered stretch occupies residues 159–216; it reads QRTYKSPQAYQRSQNSFSKSAPSASSMGGASKGQSGFFGSSRPTSSPAVSSGTRGFNS. Residues 171-209 show a composition bias toward low complexity; the sequence is SQNSFSKSAPSASSMGGASKGQSGFFGSSRPTSSPAVSS.

This sequence belongs to the UPF0323 family.

It is found in the cell membrane. The polypeptide is UPF0323 lipoprotein HPG27_212 (Helicobacter pylori (strain G27)).